Reading from the N-terminus, the 348-residue chain is Protein RecA (348 aa).

71–78 contributes to the ATP binding site; the sequence is GVESSGKT.

This sequence belongs to the RecA family.

The protein localises to the cytoplasm. Its function is as follows. Can catalyze the hydrolysis of ATP in the presence of single-stranded DNA, the ATP-dependent uptake of single-stranded DNA by duplex DNA, and the ATP-dependent hybridization of homologous single-stranded DNAs. It interacts with LexA causing its activation and leading to its autocatalytic cleavage. The sequence is that of Protein RecA from Aquifex pyrophilus.